A 135-amino-acid polypeptide reads, in one-letter code: Putative pre-16S rRNA nuclease (135 aa).

It belongs to the YqgF nuclease family.

It is found in the cytoplasm. Its function is as follows. Could be a nuclease involved in processing of the 5'-end of pre-16S rRNA. This is Putative pre-16S rRNA nuclease from Christiangramia forsetii (strain DSM 17595 / CGMCC 1.15422 / KT0803) (Gramella forsetii).